The primary structure comprises 606 residues: Mitogen-activated protein kinase 20 (606 aa).

Residues 25-316 (FKVQEVIGKG…AEEALADPYF (292 aa)) enclose the Protein kinase domain. ATP is bound by residues 31 to 39 (IGKGSYGVV) and K54. D151 (proton acceptor) is an active-site residue. T187 is modified (phosphothreonine). The short motif at 187-189 (TDY) is the TXY element. At Y189 the chain carries Phosphotyrosine. T192 bears the Phosphothreonine mark.

It belongs to the protein kinase superfamily. CMGC Ser/Thr protein kinase family. MAP kinase subfamily. Dually phosphorylated on Thr-187 and Tyr-189, which activates the enzyme.

The catalysed reaction is L-seryl-[protein] + ATP = O-phospho-L-seryl-[protein] + ADP + H(+). It carries out the reaction L-threonyl-[protein] + ATP = O-phospho-L-threonyl-[protein] + ADP + H(+). Activated by threonine and tyrosine phosphorylation. The chain is Mitogen-activated protein kinase 20 (MPK20) from Arabidopsis thaliana (Mouse-ear cress).